The following is a 302-amino-acid chain: Serine/threonine-protein phosphatase alpha-3 isoform (302 aa).

Asp-62, His-64, Asp-90, and Asn-122 together coordinate Mn(2+). The active-site Proton donor is His-123. Mn(2+) contacts are provided by His-171 and His-246.

Belongs to the PPP phosphatase family. PP-1 subfamily. In terms of assembly, interacts with Nop17l. Requires Mn(2+) as cofactor.

It catalyses the reaction O-phospho-L-seryl-[protein] + H2O = L-seryl-[protein] + phosphate. The catalysed reaction is O-phospho-L-threonyl-[protein] + H2O = L-threonyl-[protein] + phosphate. The polypeptide is Serine/threonine-protein phosphatase alpha-3 isoform (Pp1-13C) (Drosophila melanogaster (Fruit fly)).